The following is a 235-amino-acid chain: Small ribosomal subunit protein eS6 (235 aa).

The segment at 190–212 is disordered; sequence GFHPRERGERRRKSVRGRMIPDP.

Belongs to the eukaryotic ribosomal protein eS6 family.

The sequence is that of Small ribosomal subunit protein eS6 from Aeropyrum pernix (strain ATCC 700893 / DSM 11879 / JCM 9820 / NBRC 100138 / K1).